Here is a 264-residue protein sequence, read N- to C-terminus: N-carbamoylsarcosine amidase (264 aa).

Cysteine 177 functions as the Nucleophile in the catalytic mechanism. A disordered region spans residues 240–264 (TVPKTLSDPQPEVEAPADPVFAEQH).

Homotetramer. The cofactor is sulfate.

It carries out the reaction N-carbamoylsarcosine + H2O + 2 H(+) = sarcosine + NH4(+) + CO2. It functions in the pathway amine and polyamine degradation; creatinine degradation; sarcosine from creatinine: step 3/3. In Arthrobacter sp, this protein is N-carbamoylsarcosine amidase.